Reading from the N-terminus, the 458-residue chain is tRNA-2-methylthio-N(6)-dimethylallyladenosine synthase (458 aa).

Residues 15–134 (KKVFIKTYGC…LPELLQQAQQ (120 aa)) form the MTTase N-terminal domain. Cys24, Cys60, Cys97, Cys175, Cys179, and Cys182 together coordinate [4Fe-4S] cluster. The Radical SAM core domain maps to 161–393 (QKRGVSAFLT…QALLLDQQHR (233 aa)). The TRAM domain occupies 396–457 (RSKIGQTTDV…SNSFVGEKAN (62 aa)).

Belongs to the methylthiotransferase family. MiaB subfamily. In terms of assembly, monomer. Requires [4Fe-4S] cluster as cofactor.

The protein resides in the cytoplasm. It catalyses the reaction N(6)-dimethylallyladenosine(37) in tRNA + (sulfur carrier)-SH + AH2 + 2 S-adenosyl-L-methionine = 2-methylsulfanyl-N(6)-dimethylallyladenosine(37) in tRNA + (sulfur carrier)-H + 5'-deoxyadenosine + L-methionine + A + S-adenosyl-L-homocysteine + 2 H(+). Its function is as follows. Catalyzes the methylthiolation of N6-(dimethylallyl)adenosine (i(6)A), leading to the formation of 2-methylthio-N6-(dimethylallyl)adenosine (ms(2)i(6)A) at position 37 in tRNAs that read codons beginning with uridine. This chain is tRNA-2-methylthio-N(6)-dimethylallyladenosine synthase, found in Bartonella bacilliformis (strain ATCC 35685 / KC583 / Herrer 020/F12,63).